Here is a 247-residue protein sequence, read N- to C-terminus: UPF0246 protein CD630_18230 (247 aa).

The protein belongs to the UPF0246 family.

This chain is UPF0246 protein CD630_18230, found in Clostridioides difficile (strain 630) (Peptoclostridium difficile).